The primary structure comprises 561 residues: MSTLLSILSVICSQAIAKAFPNLEDWAPEITPSTKEHFGHYQCNDAMKLARVLKKAPRAIAEAIVAELPQEPFSLIEIAGAGFINFTFSPVFLNQQLEHFKDALKLGFQVSQPKKIIIDFSSPNIAKDMHVGHLRSTIIGDSLARIFSYVGHDVLRLNHIGDWGTAFGMLITYLQENPCDYSDLEDLTSLYKKAYVCFTNDEEFKKRSQQNVVALQAKDPQAIAIWEKICETSEKAFQKIYDILDIVVEKRGESFYNPFLPEIIEDLEKKGLLTVSNDAKCVFHEAFSIPFMVQKSDGGYNYATTDLAAMRYRIEEDHADKIIIVTDLGQSLHFQLLEATAIAAGYLQPGIFSHVGFGLVLDPQGKKLKTRSGENVKLRELLDTAIEKAEEALREHRPELTDEAIQERAPVIGINAIKYSDLSSHRTSDYVFSFEKMLRFEGNTAMFLLYAYVRIQGIKRRLGISQLSLEGPPEIQEPAEELLALTLLRFPEALESTIKELCPHFLTDYLYNLTHKFNGFFRDSHIQDSPYAKSRLFLCALAEQVLATGMHLLGLKTLERL.

A 'HIGH' region motif is present at residues 123 to 133 (PNIAKDMHVGH).

It belongs to the class-I aminoacyl-tRNA synthetase family. In terms of assembly, monomer.

The protein resides in the cytoplasm. It catalyses the reaction tRNA(Arg) + L-arginine + ATP = L-arginyl-tRNA(Arg) + AMP + diphosphate. The protein is Arginine--tRNA ligase (argS) of Chlamydia pneumoniae (Chlamydophila pneumoniae).